Consider the following 938-residue polypeptide: RIPOR family member 3 (938 aa).

3 positions are modified to phosphoserine: Ser9, Ser24, and Ser340. A Phosphothreonine modification is found at Thr345. 2 positions are modified to phosphoserine: Ser351 and Ser384. 2 disordered regions span residues 402–430 (EMDS…FLPV) and 579–603 (FGGS…SPSE).

Belongs to the RIPOR family.

This is RIPOR family member 3 from Mus musculus (Mouse).